Reading from the N-terminus, the 628-residue chain is Netrin-4 (628 aa).

The first 19 residues, 1–19 (MGSCARLLLLWGCSAVAAG), serve as a signal peptide directing secretion. The Laminin N-terminal domain occupies 30–261 (CEKACNPRMG…AVYDFIVKGS (232 aa)). Residues Asn-56 and Asn-163 are each glycosylated (N-linked (GlcNAc...) asparagine). Disulfide bonds link Cys-262–Cys-271, Cys-264–Cys-293, Cys-295–Cys-304, Cys-307–Cys-329, Cys-332–Cys-341, Cys-334–Cys-359, Cys-362–Cys-371, Cys-374–Cys-392, Cys-395–Cys-413, Cys-397–Cys-420, Cys-422–Cys-431, and Cys-434–Cys-446. 3 consecutive Laminin EGF-like domains span residues 262-331 (CFCN…ECRT), 332-394 (CKCN…ACKA), and 395-448 (CSCH…GCRP). An N-linked (GlcNAc...) asparagine glycan is attached at Asn-353. N-linked (GlcNAc...) asparagine glycosylation is present at Asn-483. Disulfide bonds link Cys-506/Cys-576 and Cys-520/Cys-627. An NTR domain is found at 506–627 (CECKEQVLGN…RVMHILKRDC (122 aa)).

As to quaternary structure, may form a homodimer. In terms of tissue distribution, expressed in kidney, liver, heart, ovary, testis, retina, brain, olfactory bulb, and widely expressed in embryo.

The protein localises to the secreted. Its subcellular location is the extracellular space. It is found in the extracellular matrix. It localises to the basement membrane. In terms of biological role, may play an important role in neural, kidney and vascular development. Promotes neurite elongation from olfactory bulb explants. The polypeptide is Netrin-4 (Ntn4) (Mus musculus (Mouse)).